Here is a 381-residue protein sequence, read N- to C-terminus: tRNA pseudouridine synthase D (381 aa).

Asp81 serves as the catalytic Nucleophile. Residues 160-335 (GMPNYFGSQR…TLGSRRFFWV (176 aa)) enclose the TRUD domain.

It belongs to the pseudouridine synthase TruD family.

The catalysed reaction is uridine(13) in tRNA = pseudouridine(13) in tRNA. Responsible for synthesis of pseudouridine from uracil-13 in transfer RNAs. This is tRNA pseudouridine synthase D from Helicobacter pylori (strain HPAG1).